The following is a 363-amino-acid chain: MSTILNVLTDTWSPRAKKLEGDAKIWAIGTATPANWVDQTTYPDFYFRITNSQHLLEHKEKFRRICNKSKIRKRHLVLTEELLKKNPNLCTYNETSLNTRQDILVAEVPKLGKEAAMKAIKEWGRPISEITHLVFCTTSGVDMPGADFQLTKLLGLNSSVKRLMMYQQGCNAGAAMLRLAKDLAESNKGGRVLVVCAEITINIFRGPSLEQDDNLLAQCLFGDGAAAMIVAADPRPGLETPLFELVSSAQTIVPNTDSHLKLHLREMGLTFHCSKAVPSVLAENVEDCLVKAFEPYGISDWNSIFWVFHPGGNAIVDRVEERLGLGPEKFRASRDVLSEYGNLTSACVLFTLDEMRKKSKKDE.

The active site involves Cys-170.

Belongs to the thiolase-like superfamily. Chalcone/stilbene synthases family.

It catalyses the reaction (E)-4-coumaroyl-CoA + 3 malonyl-CoA + 3 H(+) = 2',4,4',6'-tetrahydroxychalcone + 3 CO2 + 4 CoA. Its pathway is secondary metabolite biosynthesis; flavonoid biosynthesis. Its function is as follows. The primary product of this enzyme is 4,2',4',6'-tetrahydroxychalcone (also termed naringenin-chalcone or chalcone) which can under specific conditions spontaneously isomerize into naringenin. The polypeptide is Chalcone synthase B (CHSB) (Ipomoea nil (Japanese morning glory)).